We begin with the raw amino-acid sequence, 1661 residues long: Microtubule cross-linking factor 2 (1661 aa).

A disordered region spans residues 1–187; that stretch reads MEAPAAEPPV…EPSVAASSVG (187 aa). 2 stretches are compositionally biased toward low complexity: residues 76 to 94 and 133 to 149; these read AVAP…VRTG and LLGL…SAAG. The span at 167–176 shows a compositional bias: pro residues; the sequence is QQPPRPPASP. Residues 211–240 form a required for association with Golgi apparatus membrane region; sequence PSGLVRELEELRSENDYLKDEIEELRAEML. Coiled coils occupy residues 218–281 and 310–351; these read LEEL…AERR and SMRL…LQTE. The interval 353 to 373 is disordered; that stretch reads ERPREHSLKKRGTRSLGKADK. 3 coiled-coil regions span residues 450–484, 820–865, and 1083–1117; these read LKLV…MKDH, IKEL…LKED, and SQEK…LQKA. Ser1169 bears the Phosphoserine mark. The disordered stretch occupies residues 1196 to 1221; the sequence is AFGFVSSEPGDPEKDTKEKPGLSSRD. The segment covering 1206-1215 has biased composition (basic and acidic residues); that stretch reads DPEKDTKEKP. A Phosphoserine modification is found at Ser1255. Disordered stretches follow at residues 1432–1456, 1538–1563, and 1636–1661; these read RPCC…DSSK, RAPS…ASYH, and HSPS…PPSE. Residues 1652 to 1661 are compositionally biased toward basic and acidic residues; sequence GEERALPPSE.

Belongs to the MTCL family. In terms of assembly, interacts with CLASP1 and CLASP2. The C-terminal 25 kDa form occurs as a monomer. Proteolytically cleaved in primary hepatocytes into a C-terminal 80 kDa form. Proteolytically cleaved into a C-terminal SOGA 25 kDa form that is detected in plasma. In terms of processing, phosphorylated during mitosis in a CDK1-dependent manner.

The protein resides in the cytoplasm. Its subcellular location is the cytoskeleton. It localises to the golgi apparatus membrane. It is found in the midbody. The protein localises to the secreted. Functionally, microtubule-associated factor that enables integration of the centrosomal and Golgi-associated microtubules on the Golgi membrane, supporting directional migration. Preferentially acts on the perinuclear microtubules accumulated around the Golgi. Associates with the Golgi membrane through the N-terminal coiled-coil region and directly binds microtubules through the C-terminal domain. Required for faithful chromosome segregation during mitosis. Regulates autophagy by playing a role in the reduction of glucose production in an adiponectin- and insulin-dependent manner. The sequence is that of Microtubule cross-linking factor 2 from Homo sapiens (Human).